The chain runs to 101 residues: Protein Tat (101 aa).

Residues 1–24 (MEPVDPNLEPWKHPGSQPRTACNN) are interaction with human CREBBP. Residues 1–48 (MEPVDPNLEPWKHPGSQPRTACNNCYCKKCCFHCYACFTRKGLGISYG) form a transactivation region. Cysteine 22, cysteine 25, and cysteine 27 together coordinate Zn(2+). The segment at 22–37 (CNNCYCKKCCFHCYAC) is cysteine-rich. Position 28 is an N6-acetyllysine; by host PCAF (lysine 28). The Zn(2+) site is built by cysteine 30, histidine 33, cysteine 34, and cysteine 37. Residues 38–48 (FTRKGLGISYG) form a core region. The segment covering 48–57 (GRKKRRQRRR) has biased composition (basic residues). Positions 48–101 (GRKKRRQRRRAPQDSQTHQASLSKQPASQSRGDPTGPTESKKKVERETETDPFD) are disordered. A Nuclear localization signal, RNA-binding (TAR), and protein transduction motif is present at residues 49–57 (RKKRRQRRR). The tract at residues 49 to 86 (RKKRRQRRRAPQDSQTHQASLSKQPASQSRGDPTGPTE) is interaction with the host capping enzyme RNGTT. N6-acetyllysine; by host EP300 and GCN5L2 occurs at positions 50 and 51. 2 positions are modified to asymmetric dimethylarginine; by host PRMT6: arginine 52 and arginine 53. Over residues 60 to 79 (QDSQTHQASLSKQPASQSRG) the composition is skewed to polar residues. Lysine 71 is covalently cross-linked (Glycyl lysine isopeptide (Lys-Gly) (interchain with G-Cter in ubiquitin)). The Cell attachment site motif lies at 78-80 (RGD). Residues 86–101 (ESKKKVERETETDPFD) show a composition bias toward basic and acidic residues.

Belongs to the lentiviruses Tat family. In terms of assembly, interacts with host CCNT1. Associates with the P-TEFb complex composed at least of Tat, P-TEFb (CDK9 and CCNT1), TAR RNA, RNA Pol II. Recruits the HATs CREBBP, TAF1/TFIID, EP300, PCAF and GCN5L2. Interacts with host KAT5/Tip60; this interaction targets the latter to degradation. Interacts with the host deacetylase SIRT1. Interacts with host capping enzyme RNGTT; this interaction stimulates RNGTT. Binds to host KDR, and to the host integrins ITGAV/ITGB3 and ITGA5/ITGB1. Interacts with host KPNB1/importin beta-1 without previous binding to KPNA1/importin alpha-1. Interacts with EIF2AK2. Interacts with host nucleosome assembly protein NAP1L1; this interaction may be required for the transport of Tat within the nucleus, since the two proteins interact at the nuclear rim. Interacts with host C1QBP/SF2P32; this interaction involves lysine-acetylated Tat. Interacts with the host chemokine receptors CCR2, CCR3 and CXCR4. Interacts with host DPP4/CD26; this interaction may trigger an anti-proliferative effect. Interacts with host LDLR. Interacts with the host extracellular matrix metalloproteinase MMP1. Interacts with host PRMT6; this interaction mediates Tat's methylation. Interacts with, and is ubiquitinated by MDM2/Hdm2. Interacts with host PSMC3 and HTATIP2. Interacts with STAB1; this interaction may overcome SATB1-mediated repression of IL2 and IL2RA (interleukin) in T cells by binding to the same domain than HDAC1. Interacts (when acetylated) with human CDK13, thereby increasing HIV-1 mRNA splicing and promoting the production of the doubly spliced HIV-1 protein Nef. Interacts with host TBP; this interaction modulates the activity of transcriptional pre-initiation complex. Interacts with host RELA. Interacts with host PLSCR1; this interaction negatively regulates Tat transactivation activity by altering its subcellular distribution. In terms of processing, asymmetrical arginine methylation by host PRMT6 seems to diminish the transactivation capacity of Tat and affects the interaction with host CCNT1. Post-translationally, acetylation by EP300, CREBBP, GCN5L2/GCN5 and PCAF regulates the transactivation activity of Tat. EP300-mediated acetylation of Lys-50 promotes dissociation of Tat from the TAR RNA through the competitive binding to PCAF's bromodomain. In addition, the non-acetylated Tat's N-terminus can also interact with PCAF. PCAF-mediated acetylation of Lys-28 enhances Tat's binding to CCNT1. Lys-50 is deacetylated by SIRT1. Polyubiquitination by host MDM2 does not target Tat to degradation, but activates its transactivation function and fosters interaction with CCNT1 and TAR RNA. In terms of processing, phosphorylated by EIF2AK2 on serine and threonine residues adjacent to the basic region important for TAR RNA binding and function. Phosphorylation of Tat by EIF2AK2 is dependent on the prior activation of EIF2AK2 by dsRNA.

The protein resides in the host nucleus. It is found in the host nucleolus. Its subcellular location is the host cytoplasm. The protein localises to the secreted. Functionally, transcriptional activator that increases RNA Pol II processivity, thereby increasing the level of full-length viral transcripts. Recognizes a hairpin structure at the 5'-LTR of the nascent viral mRNAs referred to as the transactivation responsive RNA element (TAR) and recruits the cyclin T1-CDK9 complex (P-TEFb complex) that will in turn hyperphosphorylate the RNA polymerase II to allow efficient elongation. The CDK9 component of P-TEFb and other Tat-activated kinases hyperphosphorylate the C-terminus of RNA Pol II that becomes stabilized and much more processive. Other factors such as HTATSF1/Tat-SF1, SUPT5H/SPT5, and HTATIP2 are also important for Tat's function. Besides its effect on RNA Pol II processivity, Tat induces chromatin remodeling of proviral genes by recruiting the histone acetyltransferases (HATs) CREBBP, EP300 and PCAF to the chromatin. This also contributes to the increase in proviral transcription rate, especially when the provirus integrates in transcriptionally silent region of the host genome. To ensure maximal activation of the LTR, Tat mediates nuclear translocation of NF-kappa-B by interacting with host RELA. Through its interaction with host TBP, Tat may also modulate transcription initiation. Tat can reactivate a latently infected cell by penetrating in it and transactivating its LTR promoter. In the cytoplasm, Tat is thought to act as a translational activator of HIV-1 mRNAs. In terms of biological role, extracellular circulating Tat can be endocytosed by surrounding uninfected cells via the binding to several surface receptors such as CD26, CXCR4, heparan sulfate proteoglycans (HSPG) or LDLR. Neurons are rarely infected, but they internalize Tat via their LDLR. Through its interaction with nuclear HATs, Tat is potentially able to control the acetylation-dependent cellular gene expression. Modulates the expression of many cellular genes involved in cell survival, proliferation or in coding for cytokines or cytokine receptors. Tat plays a role in T-cell and neurons apoptosis. Tat induced neurotoxicity and apoptosis probably contribute to neuroAIDS. Circulating Tat also acts as a chemokine-like and/or growth factor-like molecule that binds to specific receptors on the surface of the cells, affecting many cellular pathways. In the vascular system, Tat binds to ITGAV/ITGB3 and ITGA5/ITGB1 integrins dimers at the surface of endothelial cells and competes with bFGF for heparin-binding sites, leading to an excess of soluble bFGF. This chain is Protein Tat, found in Homo sapiens (Human).